The primary structure comprises 135 residues: Large ribosomal subunit protein mL61 (135 aa).

Positions 114–129 are enriched in basic and acidic residues; sequence HHESSPENIKEAHKQD. Residues 114-135 are disordered; the sequence is HHESSPENIKEAHKQDYSPPSN.

This sequence belongs to the mitochondrion-specific ribosomal protein mL61 family. In terms of assembly, component of the mitochondrial large ribosomal subunit (mt-LSU). Mature yeast 74S mitochondrial ribosomes consist of a small (37S) and a large (54S) subunit. The 37S small subunit contains a 15S ribosomal RNA (15S mt-rRNA) and at least 32 different proteins. The 54S large subunit contains a 21S rRNA (21S mt-rRNA) and at least 45 different proteins.

Its subcellular location is the mitochondrion. Its function is as follows. Component of the mitochondrial ribosome (mitoribosome), a dedicated translation machinery responsible for the synthesis of mitochondrial genome-encoded proteins, including at least some of the essential transmembrane subunits of the mitochondrial respiratory chain. The mitoribosomes are attached to the mitochondrial inner membrane and translation products are cotranslationally integrated into the membrane. mL61 is not essential in cells grown at 30 degrees Celsius but is required for mitochondrial translation in cells grown at 18 degrees Celsius. The chain is Large ribosomal subunit protein mL61 (mrp49) from Schizosaccharomyces pombe (strain 972 / ATCC 24843) (Fission yeast).